The primary structure comprises 2347 residues: Proto-oncogene tyrosine-protein kinase ROS (2347 aa).

An N-terminal signal peptide occupies residues 1 to 27 (MKNIYCLIPKLVNFATLGCLWISVVQC). The Extracellular segment spans residues 28-1859 (TVLNSCLKSC…LVGDDFWIPE (1832 aa)). N-linked (GlcNAc...) asparagine glycans are attached at residues N52, N114, and N123. 2 consecutive Fibronectin type-III domains span residues 101 to 196 (LPTA…VPET) and 197 to 285 (APLI…SSSA). N-linked (GlcNAc...) asparagine glycans are attached at residues N324, N352, N396, N471, N607, N628, N706, N714, N732, N939, N961, N1015, N1087, N1090, N1095, N1211, N1272, N1330, N1458, N1461, N1474, N1499, N1565, N1669, N1715, N1738, and N1808. Positions 557 to 671 (LPGRPQELSV…EPSVGTTLVP (115 aa)) constitute a Fibronectin type-III 3 domain. Fibronectin type-III domains lie at 947 to 1042 (IPDS…TVPS) and 1043 to 1150 (APEN…TSEI). 4 Fibronectin type-III domains span residues 1450–1556 (DTVE…TKNG), 1557–1656 (VPEA…VEMF), 1658–1751 (TPEK…TKAG), and 1752–1854 (VPNK…VGDD). The chain crosses the membrane as a helical span at residues 1860-1882 (TSFILTIIVGIFLVVTIPLTFVW). The Cytoplasmic segment spans residues 1883–2347 (HRRLKNQKSA…THSGYGDGSD (465 aa)). A Protein kinase domain is found at 1945–2222 (LTLRLLLGSG…DQLQLFRNFF (278 aa)). Residues 1951-1959 (LGSGAFGEV) and K1980 contribute to the ATP site. D2079 (proton acceptor) is an active-site residue. Y2274 carries the post-translational modification Phosphotyrosine; by autocatalysis. Residues 2284–2311 (GEEKSEGPLGSQESESCGLRKEEKEPHA) form a disordered region. The segment covering 2301–2311 (GLRKEEKEPHA) has biased composition (basic and acidic residues). Position 2334 is a phosphotyrosine; by autocatalysis (Y2334).

Belongs to the protein kinase superfamily. Tyr protein kinase family. Insulin receptor subfamily. In terms of assembly, interacts with PTPN6 (via SH2 1 domain); the interaction is direct and promotes ROS1 dephosphorylation. Interacts with PTPN11; may activate the PI3 kinase-mTOR signaling pathway. Interacts with VAV3; constitutive interaction mediating VAV3 phosphorylation. Phosphorylated. Probably autophosphorylates. Phosphorylation at Tyr-2274 is required for the interaction with PTPN6 that mediates ROS1 dephosphorylation. Phosphorylation at Tyr-2274 stimulates the kinase activity and the activation of the ERK1 signaling cascade. Phosphorylation at Tyr-2274 and/or Tyr-2334 recruits PTPN11. In terms of tissue distribution, expressed in brain. Expression is increased in primary gliomas.

Its subcellular location is the cell membrane. It carries out the reaction L-tyrosyl-[protein] + ATP = O-phospho-L-tyrosyl-[protein] + ADP + H(+). Its activity is regulated as follows. Inhibited by dephosphorylation by PTPN6. Receptor tyrosine kinase (RTK) that plays a role in epithelial cell differentiation and regionalization of the proximal epididymal epithelium. NELL2 is an endogenous ligand for ROS1. Upon endogenous stimulation by NELL2, ROS1 activates the intracellular signaling pathway and triggers epididymal epithelial differentiation and subsequent sperm maturation. May activate several downstream signaling pathways related to cell differentiation, proliferation, growth and survival including the PI3 kinase-mTOR signaling pathway. Mediates the phosphorylation of PTPN11, an activator of this pathway. May also phosphorylate and activate the transcription factor STAT3 to control anchorage-independent cell growth. Mediates the phosphorylation and the activation of VAV3, a guanine nucleotide exchange factor regulating cell morphology. May activate other downstream signaling proteins including AKT1, MAPK1, MAPK3, IRS1 and PLCG2. In Homo sapiens (Human), this protein is Proto-oncogene tyrosine-protein kinase ROS (ROS1).